We begin with the raw amino-acid sequence, 150 residues long: Large ribosomal subunit protein bL9 (150 aa).

This sequence belongs to the bacterial ribosomal protein bL9 family.

Its function is as follows. Binds to the 23S rRNA. The polypeptide is Large ribosomal subunit protein bL9 (Mycoplasmopsis pulmonis (strain UAB CTIP) (Mycoplasma pulmonis)).